We begin with the raw amino-acid sequence, 501 residues long: Endoglucanase 8 (501 aa).

The N-terminal stretch at 1-35 (MKPRSSRDGHNAAAAAALLLAALVLSGDVLPAVVA) is a signal peptide. Asp-95 (nucleophile) is an active-site residue. Asn-298 is a glycosylation site (N-linked (GlcNAc...) asparagine). Residue His-414 is part of the active site. Asn-462 carries N-linked (GlcNAc...) asparagine glycosylation. Asp-465 is an active-site residue. The N-linked (GlcNAc...) asparagine glycan is linked to Asn-469. Glu-474 is a catalytic residue.

This sequence belongs to the glycosyl hydrolase 9 (cellulase E) family.

It localises to the secreted. It catalyses the reaction Endohydrolysis of (1-&gt;4)-beta-D-glucosidic linkages in cellulose, lichenin and cereal beta-D-glucans.. This is Endoglucanase 8 from Oryza sativa subsp. japonica (Rice).